Reading from the N-terminus, the 294-residue chain is uncharacterized protein (294 aa).

The segment at 259–294 (LNAPTPIPPPITSHAGQEEALKPQRASKGKKAKARK) is disordered. Over residues 283 to 294 (RASKGKKAKARK) the composition is skewed to basic residues.

This is an uncharacterized protein from Homo sapiens (Human).